Consider the following 223-residue polypeptide: Ras-related protein Rab-37 (223 aa).

Low complexity predominate over residues 1–13 (MTGTPGAATAGDG). Residues 1–22 (MTGTPGAATAGDGEAPERSPPF) are disordered. N-acetylthreonine is present on T2. S38, G39, V40, G41, K42, T43, C44, and T62 together coordinate GTP. T43 serves as a coordination point for Mg(2+). 2 short sequence motifs (switch) span residues 52–67 (GAFL…GIDS) and 85–102 (DTAG…YYRD). Mg(2+) contacts are provided by T62 and D85. The GTP site is built by G88, N143, K144, D146, S173, A174, and K175. 2 S-geranylgeranyl cysteine lipidation sites follow: C219 and C220. Position 220 is a cysteine methyl ester (C220). The propeptide at 221 to 223 (SFV) is removed in mature form.

This sequence belongs to the small GTPase superfamily. Rab family. In terms of assembly, interacts with RIMS1. Interacts (in GDP-bound form) with RPGR, RPGR functions as guanine exchange factor (GEF). Mg(2+) serves as cofactor. Expressed in the retina (at protein level). Specifically expressed in the bone marrow mast cells.

It localises to the cytoplasmic vesicle. It is found in the cell projection. Its subcellular location is the cilium. The catalysed reaction is GTP + H2O = GDP + phosphate + H(+). Regulated by guanine nucleotide exchange factors (GEFs) including RPGR which promote the exchange of bound GDP for free GTP. Regulated by GTPase activating proteins (GAPs) which increase the GTP hydrolysis activity. Inhibited by GDP dissociation inhibitors (GDIs). In terms of biological role, the small GTPases Rab are key regulators of intracellular membrane trafficking, from the formation of transport vesicles to their fusion with membranes. Rabs cycle between an inactive GDP-bound form and an active GTP-bound form that is able to recruit to membranes different sets of downstream effectors directly responsible for vesicle formation, movement, tethering and fusion. Acts as an organizer for autophagosome biogenesis in a GTP-dependent manner. Involved in retinal homeostasis by autophagy regulation. The protein is Ras-related protein Rab-37 of Mus musculus (Mouse).